Reading from the N-terminus, the 889-residue chain is Coatomer subunit beta' (889 aa).

WD repeat units lie at residues 11 to 41 (NRSD…ELWN), 53 to 83 (VTET…RVFN), 95 to 125 (AHPD…KLWN), 138 to 169 (GHEH…KVWS), 182 to 214 (GQER…KIWD), and 226 to 256 (GHMS…KIWN). Residue S326 is modified to Phosphoserine. Positions 806–889 (CGAEGLPGSS…AVPEPVEEES (84 aa)) are disordered. Residues 836–864 (DENKEAEVEDSEFKESNSEAVEAEKKEEE) are compositionally biased toward basic and acidic residues. Positions 866–879 (PQQQQSEQQPEQGE) are enriched in low complexity.

This sequence belongs to the WD repeat COPB2 family. In terms of assembly, oligomeric complex that consists of at least the alpha, beta, beta', gamma, delta, epsilon and zeta subunits. Interacts with the ESCRT-0 subunit VPS27.

It is found in the cytoplasm. The protein resides in the golgi apparatus membrane. It localises to the cytoplasmic vesicle. The protein localises to the COPI-coated vesicle membrane. The coatomer is a cytosolic protein complex that binds to dilysine motifs and reversibly associates with Golgi non-clathrin-coated vesicles, which further mediate biosynthetic protein transport from the ER, via the Golgi up to the trans Golgi network. Coatomer complex is required for budding from Golgi membranes, and is essential for the retrograde Golgi-to-ER transport of dilysine-tagged proteins. This Saccharomyces cerevisiae (strain ATCC 204508 / S288c) (Baker's yeast) protein is Coatomer subunit beta' (SEC27).